Consider the following 402-residue polypeptide: Arginine deiminase (402 aa).

The active-site Amidino-cysteine intermediate is the Cys392.

The protein belongs to the arginine deiminase family.

Its subcellular location is the cytoplasm. It carries out the reaction L-arginine + H2O = L-citrulline + NH4(+). It functions in the pathway amino-acid degradation; L-arginine degradation via ADI pathway; carbamoyl phosphate from L-arginine: step 1/2. This chain is Arginine deiminase, found in Mycobacterium avium (strain 104).